Consider the following 474-residue polypeptide: Solute carrier family 49 member A3 (474 aa).

The segment at 1-20 (MEGESAETEPLIQSSSAADR) is disordered. 12 helical membrane-spanning segments follow: residues 38–58 (WFIL…WLTF), 69–89 (LCVS…AAVV), 105–126 (CSLI…CGVL), 134–154 (VFAV…LVIF), 175–195 (LASM…PLIV), 201–221 (LFLL…LATL), 258–278 (WILL…STLL), 290–310 (GFAG…AFLL), 326–346 (ICMC…QLPA), 349–369 (VLLV…YPVG), 388–408 (LIFT…QALA), and 428–448 (VPVL…VVFF).

Belongs to the major facilitator superfamily.

The protein resides in the membrane. This chain is Solute carrier family 49 member A3 (slc49a3), found in Danio rerio (Zebrafish).